The sequence spans 134 residues: Protein NrdI (134 aa).

This sequence belongs to the NrdI family.

Its function is as follows. Probably involved in ribonucleotide reductase function. The protein is Protein NrdI of Serratia proteamaculans (strain 568).